The sequence spans 390 residues: Succinate--CoA ligase [ADP-forming] subunit beta (390 aa).

The region spanning 9-244 (KEIFREYGVP…LSEEDPVEVE (236 aa)) is the ATP-grasp domain. ATP-binding positions include Lys46, 53-55 (GRG), Glu99, Ala102, and Glu107. Residues Asn199 and Asp213 each contribute to the Mg(2+) site. Substrate-binding positions include Asn264 and 321 to 323 (GIV).

It belongs to the succinate/malate CoA ligase beta subunit family. In terms of assembly, heterotetramer of two alpha and two beta subunits. It depends on Mg(2+) as a cofactor.

It catalyses the reaction succinate + ATP + CoA = succinyl-CoA + ADP + phosphate. The catalysed reaction is GTP + succinate + CoA = succinyl-CoA + GDP + phosphate. Its pathway is carbohydrate metabolism; tricarboxylic acid cycle; succinate from succinyl-CoA (ligase route): step 1/1. In terms of biological role, succinyl-CoA synthetase functions in the citric acid cycle (TCA), coupling the hydrolysis of succinyl-CoA to the synthesis of either ATP or GTP and thus represents the only step of substrate-level phosphorylation in the TCA. The beta subunit provides nucleotide specificity of the enzyme and binds the substrate succinate, while the binding sites for coenzyme A and phosphate are found in the alpha subunit. In Nitratiruptor sp. (strain SB155-2), this protein is Succinate--CoA ligase [ADP-forming] subunit beta.